A 54-amino-acid polypeptide reads, in one-letter code: Small ribosomal subunit protein uS14 (54 aa).

Zn(2+) contacts are provided by Cys19, Cys22, Cys37, and Cys40.

The protein belongs to the universal ribosomal protein uS14 family. Zinc-binding uS14 subfamily. As to quaternary structure, part of the 30S ribosomal subunit. Zn(2+) is required as a cofactor.

In terms of biological role, binds 16S rRNA, required for the assembly of 30S particles. In Sulfolobus acidocaldarius (strain ATCC 33909 / DSM 639 / JCM 8929 / NBRC 15157 / NCIMB 11770), this protein is Small ribosomal subunit protein uS14.